Consider the following 546-residue polypeptide: Chaperonin GroEL (546 aa).

Residues Thr30–Pro33, Lys51, Asp87–Thr91, Gly415, Asn479–Ala481, and Asp495 each bind ATP. The disordered stretch occupies residues Glu527 to Met546. The span at Gly537 to Met546 shows a compositional bias: gly residues.

The protein belongs to the chaperonin (HSP60) family. As to quaternary structure, forms a cylinder of 14 subunits composed of two heptameric rings stacked back-to-back. Interacts with the co-chaperonin GroES.

It is found in the cytoplasm. The enzyme catalyses ATP + H2O + a folded polypeptide = ADP + phosphate + an unfolded polypeptide.. In terms of biological role, together with its co-chaperonin GroES, plays an essential role in assisting protein folding. The GroEL-GroES system forms a nano-cage that allows encapsulation of the non-native substrate proteins and provides a physical environment optimized to promote and accelerate protein folding. The protein is Chaperonin GroEL of Baumannia cicadellinicola subsp. Homalodisca coagulata.